Reading from the N-terminus, the 367-residue chain is Prenyltransferase idtC (367 aa).

Positions 1-22 (MTTLAWFAGRSMVLDLAALTSA) are cleaved as a signal peptide. Residues 32 to 42 (TSTPTSTPTST) are compositionally biased toward low complexity. The tract at residues 32 to 84 (TSTPTSTPTSTDKAGTPPGSTIHHYGYPQGSVTKPNNSKTEKENGSPKDSKGN) is disordered. A glycan (N-linked (GlcNAc...) asparagine) is linked at N67. Over residues 70-82 (KTEKENGSPKDSK) the composition is skewed to basic and acidic residues. H132 provides a ligand contact to substrate. Mg(2+)-binding residues include D139 and D143. Substrate is bound at residue R148. An N-linked (GlcNAc...) asparagine glycan is attached at N150. Substrate-binding residues include K233, T234, Q264, N271, and K281.

It belongs to the FPP/GGPP synthase family. The cofactor is Mg(2+).

The protein operates within secondary metabolite biosynthesis. Its function is as follows. Prenyltransferase; part of the gene cluster that mediates the biosynthesis of paspalitrems, indole-diterpene (IDT) mycotoxins that are potent tremorgens in mammals. The geranylgeranyl diphosphate (GGPP) synthase idtG is proposed to catalyze the first step in IDT biosynthesis via catalysis of a series of iterative condensations of isopentenyl diphosphate (IPP) with dimethylallyl diphosphate (DMAPP), geranyl diphosphate (GPP), and farnesyl diphosphate (FPP), to form GGPP. Condensation of indole-3-glycerol phosphate with GGPP by the prenyltransferase idtC then forms 3-geranylgeranylindole (3-GGI). Epoxidation of the two terminal alkenes of the geranylgeranyl moiety by the FAD-dependent monooxygenase idtM, and cyclization by the terpene cyclase idtB then leads to the production of paspaline. The cytochrome P450 monooxygenase idtP then catalyzes oxidative elimination of the pendant methyl group at C-12 of paspaline and generates the C-10 ketone to yield 13-desoxypaxilline. The cytochrome P450 monooxygenase idtQ may catalyze the C-13 oxidation of 13-desoxypaxilline to afford paxilline. Considering that both paspalicine and paxilline were detected in C.paspali, idtQ also catalyzes the formation of paspalinine from 13-desoxypaxilline via paspalicine as an intermediate. Finally, the alpha-prenyltransferase idtF prenylates paspalinine at the C-20 or the C-21 positions to yield paspalitrems A and C, respectively. The hydroxylation of paspalitrem A at C-32 by a still unknown oxidase affords paspalitrem B. In Claviceps paspali (Rye ergot fungus), this protein is Prenyltransferase idtC.